An 851-amino-acid chain; its full sequence is DNA mismatch repair protein MutS (851 aa).

Position 614-621 (Gly-614–Ser-621) interacts with ATP.

The protein belongs to the DNA mismatch repair MutS family.

In terms of biological role, this protein is involved in the repair of mismatches in DNA. It is possible that it carries out the mismatch recognition step. This protein has a weak ATPase activity. The sequence is that of DNA mismatch repair protein MutS from Yersinia pestis.